The sequence spans 374 residues: Ribosomal RNA large subunit methyltransferase G (374 aa).

It belongs to the methyltransferase superfamily. RlmG family.

It is found in the cytoplasm. It catalyses the reaction guanosine(1835) in 23S rRNA + S-adenosyl-L-methionine = N(2)-methylguanosine(1835) in 23S rRNA + S-adenosyl-L-homocysteine + H(+). Functionally, specifically methylates the guanine in position 1835 (m2G1835) of 23S rRNA. The protein is Ribosomal RNA large subunit methyltransferase G of Pseudomonas savastanoi pv. phaseolicola (strain 1448A / Race 6) (Pseudomonas syringae pv. phaseolicola (strain 1448A / Race 6)).